Consider the following 204-residue polypeptide: Urease accessory protein UreE (204 aa).

The span at 172-190 shows a compositional bias: basic and acidic residues; it reads HGHAHSHDHDHDHDHDHQH. The interval 172 to 204 is disordered; sequence HGHAHSHDHDHDHDHDHQHGPGCTHGHHGHDHH.

This sequence belongs to the UreE family.

The protein resides in the cytoplasm. Its function is as follows. Involved in urease metallocenter assembly. Binds nickel. Probably functions as a nickel donor during metallocenter assembly. This is Urease accessory protein UreE from Burkholderia orbicola (strain AU 1054).